Reading from the N-terminus, the 195-residue chain is Small ribosomal subunit protein uS4 (195 aa).

The S4 RNA-binding domain occupies Arg-88–Ala-150.

Belongs to the universal ribosomal protein uS4 family. Part of the 30S ribosomal subunit. Contacts protein S5. The interaction surface between S4 and S5 is involved in control of translational fidelity.

Its function is as follows. One of the primary rRNA binding proteins, it binds directly to 16S rRNA where it nucleates assembly of the body of the 30S subunit. In terms of biological role, with S5 and S12 plays an important role in translational accuracy. This Fusobacterium nucleatum subsp. nucleatum (strain ATCC 25586 / DSM 15643 / BCRC 10681 / CIP 101130 / JCM 8532 / KCTC 2640 / LMG 13131 / VPI 4355) protein is Small ribosomal subunit protein uS4.